The chain runs to 341 residues: MSVQEVVGDPRFFARSGPYDVAAVAEAVGASIPADCTLSLTGVAPLQIAGPSEVSFLDNRRYADALEQTRAGAVIIKADMVDRVPAGVIALVVPEPYLAWARVAALFYPLPPVQPGIHPSAVVDETACIDPSAQIGPLAVIEAGVEIGPDCRIAAHAVIGAGVKMGRSCRIGSHASLSHAILGDRVYVYPGVRIGQDGFGFAPSSEGFVTVPQLGRVVLENDVEVGANSTIDRGSMHDTVIGAGSRLDNLVMIAHNVRMGRACVIVSQVGISGSTTLGDHVVLAGQAGLIGHLKIGSGARIGAQAGVMADVPAGAEIVGSPAQPAKDFFRQIATLRRLARR.

His255 (proton acceptor) is an active-site residue.

It belongs to the transferase hexapeptide repeat family. LpxD subfamily. In terms of assembly, homotrimer.

It carries out the reaction a UDP-3-O-[(3R)-3-hydroxyacyl]-alpha-D-glucosamine + a (3R)-hydroxyacyl-[ACP] = a UDP-2-N,3-O-bis[(3R)-3-hydroxyacyl]-alpha-D-glucosamine + holo-[ACP] + H(+). Its pathway is bacterial outer membrane biogenesis; LPS lipid A biosynthesis. Its function is as follows. Catalyzes the N-acylation of UDP-3-O-acylglucosamine using 3-hydroxyacyl-ACP as the acyl donor. Is involved in the biosynthesis of lipid A, a phosphorylated glycolipid that anchors the lipopolysaccharide to the outer membrane of the cell. The chain is UDP-3-O-acylglucosamine N-acyltransferase from Granulibacter bethesdensis (strain ATCC BAA-1260 / CGDNIH1).